We begin with the raw amino-acid sequence, 307 residues long: Golgi to ER traffic protein 2 (307 aa).

Residues 1 to 173 (MSDSTDSPAV…QAYDTYQQKL (173 aa)) are Cytoplasmic-facing. Positions 41-52 (LSQGSSVKTTGV) are enriched in polar residues. The tract at residues 41–73 (LSQGSSVKTTGVKSVLDEPQPTATSSAIHDEDP) is disordered. Residues 174 to 194 (WKSRFLVIRVVVTLFNFFYHY) form a helical membrane-spanning segment. At 195 to 220 (LNVPSFHASNYSYVRDLAQDEFPVRN) the chain is on the lumenal side. Residues 221–240 (FFTWFAAFEVIIVLQYYTVF) form a helical membrane-spanning segment. Residues 241-284 (HKLGLFHAANQNSMIMKLMSMGSMVLPQLNTYQPLVARFLGYYE) lie on the Cytoplasmic side of the membrane. A helical transmembrane segment spans residues 285–305 (LFGIIFGDLSLVIVLFGLLSF). Over 306-307 (TK) the chain is Lumenal.

Belongs to the GET2 family. In terms of assembly, component of the Golgi to ER traffic (GET) complex, which is composed of GET1, GET2 and GET3. Within the complex, GET1 and GET2 form a heterotetramer which is stabilized by phosphatidylinositol binding and which binds to the GET3 homodimer.

The protein localises to the endoplasmic reticulum membrane. Its subcellular location is the golgi apparatus membrane. Functionally, required for the post-translational delivery of tail-anchored (TA) proteins to the endoplasmic reticulum. Together with GET1, acts as a membrane receptor for soluble GET3, which recognizes and selectively binds the transmembrane domain of TA proteins in the cytosol. The GET complex cooperates with the HDEL receptor ERD2 to mediate the ATP-dependent retrieval of resident ER proteins that contain a C-terminal H-D-E-L retention signal from the Golgi to the ER. This chain is Golgi to ER traffic protein 2, found in Candida tropicalis (strain ATCC MYA-3404 / T1) (Yeast).